We begin with the raw amino-acid sequence, 178 residues long: Large ribosomal subunit protein uL6 (178 aa).

Belongs to the universal ribosomal protein uL6 family. Part of the 50S ribosomal subunit.

In terms of biological role, this protein binds to the 23S rRNA, and is important in its secondary structure. It is located near the subunit interface in the base of the L7/L12 stalk, and near the tRNA binding site of the peptidyltransferase center. This chain is Large ribosomal subunit protein uL6, found in Micrococcus luteus (Micrococcus lysodeikticus).